The chain runs to 381 residues: 4-hydroxyphenylpyruvate dioxygenase (381 aa).

2 VOC domains span residues 22–156 and 184–338; these read GMDA…LVDR and AIDH…IFTK. His-187, His-270, and Glu-349 together coordinate Fe cation.

Belongs to the 4HPPD family. As to quaternary structure, homodimer. The cofactor is Fe cation.

The enzyme catalyses 3-(4-hydroxyphenyl)pyruvate + O2 = homogentisate + CO2. It functions in the pathway amino-acid degradation; L-phenylalanine degradation; acetoacetate and fumarate from L-phenylalanine: step 3/6. The chain is 4-hydroxyphenylpyruvate dioxygenase (hpd) from Streptomyces avermitilis (strain ATCC 31267 / DSM 46492 / JCM 5070 / NBRC 14893 / NCIMB 12804 / NRRL 8165 / MA-4680).